A 539-amino-acid polypeptide reads, in one-letter code: Membrane protein insertase YidC (539 aa).

Residues 6 to 26 (NILLIALALVSFLLFQQWNVA) form a helical membrane-spanning segment. A compositionally biased stretch (polar residues) spans 35–44 (EQAQSGSTLP). The segment at 35 to 55 (EQAQSGSTLPAPSYADDLDPA) is disordered. The next 4 helical transmembrane spans lie at 341–361 (SFIQGIVVNWGLAIICLTFIV), 416–436 (LGGCLPILLQMPIFISLYWAL), 454–474 (LSAQDPYYILPLLMGASMFLI), and 495–515 (PVMFTFFFLFFPSGLVLYWLV).

Belongs to the OXA1/ALB3/YidC family. Type 1 subfamily. As to quaternary structure, interacts with the Sec translocase complex via SecD. Specifically interacts with transmembrane segments of nascent integral membrane proteins during membrane integration.

It is found in the cell inner membrane. Its function is as follows. Required for the insertion and/or proper folding and/or complex formation of integral membrane proteins into the membrane. Involved in integration of membrane proteins that insert both dependently and independently of the Sec translocase complex, as well as at least some lipoproteins. Aids folding of multispanning membrane proteins. The polypeptide is Membrane protein insertase YidC (Vibrio atlanticus (strain LGP32) (Vibrio splendidus (strain Mel32))).